Here is a 586-residue protein sequence, read N- to C-terminus: Aspartate--tRNA(Asp/Asn) ligase (586 aa).

Residue glutamate 175 participates in L-aspartate binding. The interval 199-202 (QIFK) is aspartate. Position 221 (arginine 221) interacts with L-aspartate. Residues 221–223 (RDE) and glutamine 230 each bind ATP. Histidine 448 provides a ligand contact to L-aspartate. Residue glutamate 482 coordinates ATP. Arginine 489 is a binding site for L-aspartate. 534-537 (GVDR) lines the ATP pocket.

It belongs to the class-II aminoacyl-tRNA synthetase family. Type 1 subfamily. Homodimer.

Its subcellular location is the cytoplasm. It carries out the reaction tRNA(Asx) + L-aspartate + ATP = L-aspartyl-tRNA(Asx) + AMP + diphosphate. Functionally, aspartyl-tRNA synthetase with relaxed tRNA specificity since it is able to aspartylate not only its cognate tRNA(Asp) but also tRNA(Asn). Reaction proceeds in two steps: L-aspartate is first activated by ATP to form Asp-AMP and then transferred to the acceptor end of tRNA(Asp/Asn). This Syntrophomonas wolfei subsp. wolfei (strain DSM 2245B / Goettingen) protein is Aspartate--tRNA(Asp/Asn) ligase.